Consider the following 102-residue polypeptide: Large ribosomal subunit protein eL21 (102 aa).

The segment covering Met-1–Arg-21 has biased composition (basic residues). Residues Met-1–Gln-33 are disordered.

This sequence belongs to the eukaryotic ribosomal protein eL21 family.

The chain is Large ribosomal subunit protein eL21 from Methanopyrus kandleri (strain AV19 / DSM 6324 / JCM 9639 / NBRC 100938).